The primary structure comprises 125 residues: Apolipoprotein C-IV (125 aa).

A signal peptide spans Met-1–Cys-27.

Belongs to the apolipoprotein C4 family.

It is found in the secreted. In terms of biological role, may participate in lipoprotein metabolism. The sequence is that of Apolipoprotein C-IV (APOC4) from Plecturocebus moloch (Dusky titi monkey).